Reading from the N-terminus, the 152-residue chain is UPF0178 protein SAB0630c (152 aa).

This sequence belongs to the UPF0178 family.

The sequence is that of UPF0178 protein SAB0630c from Staphylococcus aureus (strain bovine RF122 / ET3-1).